The primary structure comprises 2832 residues: Cyclic beta-(1,2)-glucan synthase NdvB (2832 aa).

7 helical membrane-spanning segments follow: residues 411–431 (FAIA…VYAF), 444–464 (IMLL…FNTV), 810–830 (LIPV…EPTP), 831–851 (ALIW…LSLI), 880–900 (QVAL…DAIV), 938–958 (WTAP…DTGL), and 959–979 (PFIG…AWFV). Residues 1299–1506 (LASEARLTSL…NGQLREWFHA (208 aa)) enclose the Glycoamylase-like domain.

This sequence belongs to the NdvB family.

Its subcellular location is the cell inner membrane. The catalysed reaction is [(1-&gt;2)-beta-D-glucosyl](n) + UDP-alpha-D-glucose = [(1-&gt;2)-beta-D-glucosyl](n+1) + UDP + H(+). In terms of biological role, involved in the biosynthesis of cyclic beta-(1,2)-glucan. It seems that NdvB is involved in three enzymatic activities. First, it may catalyze the transfer of the first glucose from UDP-Glc to an unknown amino acid. In the second enzymatic activity (UDP-Glc:beta-(1,2) oligosaccharide glucosyltransferase), it may be responsible for chain elongation. Finally, in the third activity, it may catalyze glucan cyclization and release from the protein. NdvB is also involved in nodule invasion and in bacteroid development. In Rhizobium meliloti (strain 1021) (Ensifer meliloti), this protein is Cyclic beta-(1,2)-glucan synthase NdvB.